Here is a 310-residue protein sequence, read N- to C-terminus: MESGNSTRRIPSFFLLGFSENPHLQFLIFVLFLSMYLVTVLGNLLIIMVIITQSPLHTPMYFFLANLSFVDICFTSTTVPKMLVNIQTQSKAITYADCISQMSVFLVFAELDNFLLAVMAYDRYVAICHPLYYTFIVNQHLCILMVLLSWVVSILHAFLQSSIVLQLTFCGDVKIPHFFCELNQLSQLTCLDSLSSHLIMNLVPVLLAVISFSSILYSYFKIVSSICSISSVQGKYTAFSTCVSHLSIVFLFYSTGLGVYVSSAVVQSSHSAARASVMYTVVTPMLNPFIYSLRNKDVKKALERLLEGKL.

At 1 to 25 the chain is on the extracellular side; sequence MESGNSTRRIPSFFLLGFSENPHLQ. Asn-5 carries N-linked (GlcNAc...) asparagine glycosylation. The chain crosses the membrane as a helical span at residues 26 to 46; sequence FLIFVLFLSMYLVTVLGNLLI. Residues 47–67 are Cytoplasmic-facing; it reads IMVIITQSPLHTPMYFFLANL. The helical transmembrane segment at 68–88 threads the bilayer; that stretch reads SFVDICFTSTTVPKMLVNIQT. The Extracellular segment spans residues 89-100; it reads QSKAITYADCIS. A disulfide bridge connects residues Cys-98 and Cys-190. The helical transmembrane segment at 101 to 121 threads the bilayer; the sequence is QMSVFLVFAELDNFLLAVMAY. Over 122 to 135 the chain is Cytoplasmic; it reads DRYVAICHPLYYTF. A helical transmembrane segment spans residues 136-156; sequence IVNQHLCILMVLLSWVVSILH. The Extracellular portion of the chain corresponds to 157–202; the sequence is AFLQSSIVLQLTFCGDVKIPHFFCELNQLSQLTCLDSLSSHLIMNL. The chain crosses the membrane as a helical span at residues 203 to 223; it reads VPVLLAVISFSSILYSYFKIV. Over 224-240 the chain is Cytoplasmic; it reads SSICSISSVQGKYTAFS. Residues 241 to 261 form a helical membrane-spanning segment; it reads TCVSHLSIVFLFYSTGLGVYV. At 262-272 the chain is on the extracellular side; it reads SSAVVQSSHSA. A helical transmembrane segment spans residues 273-293; sequence ARASVMYTVVTPMLNPFIYSL. Topologically, residues 294–310 are cytoplasmic; it reads RNKDVKKALERLLEGKL.

It belongs to the G-protein coupled receptor 1 family.

It localises to the cell membrane. In terms of biological role, odorant receptor. This chain is Olfactory receptor 7A42, found in Mus musculus (Mouse).